The chain runs to 521 residues: MFS siderochrome iron transporter 1 (521 aa).

Positions M1 to Q10 are enriched in polar residues. The segment at M1–P29 is disordered. Basic and acidic residues predominate over residues D11–P29. Helical transmembrane passes span W62–G82, F99–C119, W126–Q146, F148–V168, and I187–I207. N209 carries an N-linked (GlcNAc...) asparagine glycan. 6 helical membrane passes run Y229 to F249, L330 to L350, V379 to P399, K404 to A424, L431 to I451, and G466 to A486. Residue N487 is glycosylated (N-linked (GlcNAc...) asparagine). A helical transmembrane segment spans residues A491–L511.

The protein belongs to the major facilitator superfamily.

Its subcellular location is the membrane. In terms of biological role, major facilitator transporter probably involved in siderophore basidioferrin transmembrane transport. This Ceriporiopsis subvermispora (strain B) (White-rot fungus) protein is MFS siderochrome iron transporter 1.